The sequence spans 146 residues: Large ribosomal subunit protein uL15 (146 aa).

Over residues 1–13 (MKLHELQPAEGSR) the composition is skewed to basic and acidic residues. The disordered stretch occupies residues 1-58 (MKLHELQPAEGSRKVRNRVGRGIGSGNGKTAGKGHKGQKARSGGGVRPGFEGGQNPLY). 2 stretches are compositionally biased toward gly residues: residues 21-31 (RGIGSGNGKTA) and 42-52 (SGGGVRPGFEG).

The protein belongs to the universal ribosomal protein uL15 family. Part of the 50S ribosomal subunit.

Its function is as follows. Binds to the 23S rRNA. This is Large ribosomal subunit protein uL15 from Shouchella clausii (strain KSM-K16) (Alkalihalobacillus clausii).